A 343-amino-acid polypeptide reads, in one-letter code: 4-hydroxythreonine-4-phosphate dehydrogenase (343 aa).

The substrate site is built by histidine 141 and threonine 142. Residues histidine 175, histidine 220, and histidine 275 each coordinate a divalent metal cation. Substrate-binding residues include lysine 283, asparagine 292, and arginine 301.

Belongs to the PdxA family. As to quaternary structure, homodimer. Zn(2+) is required as a cofactor. It depends on Mg(2+) as a cofactor. Co(2+) serves as cofactor.

It localises to the cytoplasm. It carries out the reaction 4-(phosphooxy)-L-threonine + NAD(+) = 3-amino-2-oxopropyl phosphate + CO2 + NADH. Its pathway is cofactor biosynthesis; pyridoxine 5'-phosphate biosynthesis; pyridoxine 5'-phosphate from D-erythrose 4-phosphate: step 4/5. Its function is as follows. Catalyzes the NAD(P)-dependent oxidation of 4-(phosphooxy)-L-threonine (HTP) into 2-amino-3-oxo-4-(phosphooxy)butyric acid which spontaneously decarboxylates to form 3-amino-2-oxopropyl phosphate (AHAP). The protein is 4-hydroxythreonine-4-phosphate dehydrogenase of Janthinobacterium sp. (strain Marseille) (Minibacterium massiliensis).